We begin with the raw amino-acid sequence, 614 residues long: UvrABC system protein C (614 aa).

The GIY-YIG domain maps to 12–91 (ESPGVYLMKG…IKKHRPRYNL (80 aa)). Positions 201-236 (RDLLKTYRERMASAAANERYEEAARYRDLIRAIEVT) constitute a UVR domain.

It belongs to the UvrC family. In terms of assembly, interacts with UvrB in an incision complex.

The protein localises to the cytoplasm. The UvrABC repair system catalyzes the recognition and processing of DNA lesions. UvrC both incises the 5' and 3' sides of the lesion. The N-terminal half is responsible for the 3' incision and the C-terminal half is responsible for the 5' incision. This Geobacter metallireducens (strain ATCC 53774 / DSM 7210 / GS-15) protein is UvrABC system protein C.